A 263-amino-acid chain; its full sequence is Hydroxyethylthiazole kinase (263 aa).

Met39 lines the substrate pocket. 2 residues coordinate ATP: Lys115 and Thr160. Gly187 serves as a coordination point for substrate.

This sequence belongs to the Thz kinase family. Mg(2+) serves as cofactor.

It catalyses the reaction 5-(2-hydroxyethyl)-4-methylthiazole + ATP = 4-methyl-5-(2-phosphooxyethyl)-thiazole + ADP + H(+). It functions in the pathway cofactor biosynthesis; thiamine diphosphate biosynthesis; 4-methyl-5-(2-phosphoethyl)-thiazole from 5-(2-hydroxyethyl)-4-methylthiazole: step 1/1. Catalyzes the phosphorylation of the hydroxyl group of 4-methyl-5-beta-hydroxyethylthiazole (THZ). The polypeptide is Hydroxyethylthiazole kinase (Staphylococcus haemolyticus (strain JCSC1435)).